The following is a 275-amino-acid chain: Orotidine 5'-phosphate decarboxylase (275 aa).

The Proton donor role is filled by lysine 95.

Belongs to the OMP decarboxylase family. Type 2 subfamily.

The enzyme catalyses orotidine 5'-phosphate + H(+) = UMP + CO2. It functions in the pathway pyrimidine metabolism; UMP biosynthesis via de novo pathway; UMP from orotate: step 2/2. This chain is Orotidine 5'-phosphate decarboxylase, found in Delftia acidovorans (strain DSM 14801 / SPH-1).